The sequence spans 269 residues: Small ribosomal subunit protein eS1 (269 aa).

Residues 1-20 are disordered; it reads MAVGKNKGVSKGGKKGSKKK.

This sequence belongs to the eukaryotic ribosomal protein eS1 family. In terms of assembly, component of the small ribosomal subunit. Mature ribosomes consist of a small (40S) and a large (60S) subunit. The 40S subunit contains about 33 different proteins and 1 molecule of RNA (18S). The 60S subunit contains about 49 different proteins and 3 molecules of RNA (28S, 5.8S and 5S).

It localises to the cytoplasm. Functionally, has an essential role in oogenesis. The chain is Small ribosomal subunit protein eS1 from Anopheles gambiae (African malaria mosquito).